A 354-amino-acid chain; its full sequence is Probable RNA methyltransferase AZOSEA28700 (354 aa).

The active-site Proton acceptor is E88. The 227-residue stretch at 91–317 (LLPRDGLCVS…TKLRHSAGQD (227 aa)) folds into the Radical SAM core domain. Cysteines 98 and 322 form a disulfide. C105, C109, and C112 together coordinate [4Fe-4S] cluster. Residues 150-151 (GE), S180, 203-205 (SLH), and N279 each bind S-adenosyl-L-methionine. C322 serves as the catalytic S-methylcysteine intermediate.

This sequence belongs to the radical SAM superfamily. RlmN family. [4Fe-4S] cluster serves as cofactor.

Its subcellular location is the cytoplasm. This Aromatoleum aromaticum (strain DSM 19018 / LMG 30748 / EbN1) (Azoarcus sp. (strain EbN1)) protein is Probable RNA methyltransferase AZOSEA28700.